We begin with the raw amino-acid sequence, 234 residues long: UPF0173 metal-dependent hydrolase Meso_1362 (234 aa).

The protein belongs to the UPF0173 family.

This Chelativorans sp. (strain BNC1) protein is UPF0173 metal-dependent hydrolase Meso_1362.